The following is a 477-amino-acid chain: Glutamyl-tRNA(Gln) amidotransferase subunit A (477 aa).

Catalysis depends on charge relay system residues Lys71 and Ser146. Catalysis depends on Ser170, which acts as the Acyl-ester intermediate.

Belongs to the amidase family. GatA subfamily. As to quaternary structure, heterotrimer of A, B and C subunits.

It catalyses the reaction L-glutamyl-tRNA(Gln) + L-glutamine + ATP + H2O = L-glutaminyl-tRNA(Gln) + L-glutamate + ADP + phosphate + H(+). Allows the formation of correctly charged Gln-tRNA(Gln) through the transamidation of misacylated Glu-tRNA(Gln) in organisms which lack glutaminyl-tRNA synthetase. The reaction takes place in the presence of glutamine and ATP through an activated gamma-phospho-Glu-tRNA(Gln). The protein is Glutamyl-tRNA(Gln) amidotransferase subunit A of Halothermothrix orenii (strain H 168 / OCM 544 / DSM 9562).